The following is a 270-amino-acid chain: uncharacterized protein (270 aa).

Residues 1–10 (MFGLKVKDAT) are compositionally biased toward basic and acidic residues. Disordered regions lie at residues 1 to 115 (MFGL…PTPW) and 215 to 236 (QTGF…QGEQ). Low complexity-rich tracts occupy residues 26–41 (SSSS…TQRG) and 98–113 (GTSP…GTPT).

Belongs to the adhesin P1 family.

This is an uncharacterized protein from Mycoplasma pneumoniae (strain ATCC 29342 / M129 / Subtype 1) (Mycoplasmoides pneumoniae).